Reading from the N-terminus, the 171-residue chain is Putative antiporter subunit mnhG2 (171 aa).

A run of 3 helical transmembrane segments spans residues 11 to 31, 51 to 71, and 72 to 92; these read IAALLIFLGSIIAVISAIGIV, VLLTLVGVLIYFTNEQSFFSV, and RLLLSIVFINLTSPVGMHLVA. Basic and acidic residues predominate over residues 144–156; sequence DVQKQRQKEKQQE. Residues 144–171 are disordered; the sequence is DVQKQRQKEKQQEENIESLSEARRETKD.

It belongs to the CPA3 antiporters (TC 2.A.63) subunit G family. May form a heterooligomeric complex that consists of seven subunits: mnhA2, mnhB2, mnhC2, mnhD2, mnhE2, mnhF2 and mnhG2.

The protein localises to the cell membrane. This chain is Putative antiporter subunit mnhG2 (mnhG2), found in Staphylococcus haemolyticus (strain JCSC1435).